We begin with the raw amino-acid sequence, 360 residues long: Peptide chain release factor 1 (360 aa).

The residue at position 235 (glutamine 235) is an N5-methylglutamine. The interval 284–312 (ERQAQAQADTRRNLLGSGDRSDKIRTYNY) is disordered.

It belongs to the prokaryotic/mitochondrial release factor family. Post-translationally, methylated by PrmC. Methylation increases the termination efficiency of RF1.

The protein localises to the cytoplasm. Peptide chain release factor 1 directs the termination of translation in response to the peptide chain termination codons UAG and UAA. The chain is Peptide chain release factor 1 from Histophilus somni (strain 129Pt) (Haemophilus somnus).